The primary structure comprises 24 residues: Retinol-binding protein 3 (24 aa).

The protein localises to the secreted. The protein resides in the extracellular space. It is found in the extracellular matrix. Its subcellular location is the interphotoreceptor matrix. Its function is as follows. IRBP shuttles 11-cis and all trans retinoids between the retinol isomerase in the pigment epithelium and the visual pigments in the photoreceptor cells of the retina. The sequence is that of Retinol-binding protein 3 (RBP3) from Ovis aries (Sheep).